We begin with the raw amino-acid sequence, 188 residues long: UPF0340 protein BH3766 (188 aa).

The protein belongs to the UPF0340 family.

The protein is UPF0340 protein BH3766 of Halalkalibacterium halodurans (strain ATCC BAA-125 / DSM 18197 / FERM 7344 / JCM 9153 / C-125) (Bacillus halodurans).